A 273-amino-acid polypeptide reads, in one-letter code: L-cysteine S-thiosulfotransferase subunit SoxA (273 aa).

An N-terminal signal peptide occupies residues 1 to 24 (MKKTVTAVALLCALSSTAIAPTFA). C74 and C110 are joined by a disulfide. One can recognise a Cytochrome c domain in the interval 162-273 (EMYELGKRMF…GVMLTPGIKR (112 aa)). Heme-binding residues include C182 and H186. A substrate-binding site is contributed by R230. C234 is a binding site for heme. C234 (cysteine persulfide intermediate) is an active-site residue.

This sequence belongs to the SoxA family. As to quaternary structure, heterodimer of SoxA and SoxX. Requires heme as cofactor. Post-translationally, cysteine persulfide at Cys-234.

The protein resides in the periplasm. It carries out the reaction L-cysteinyl-[SoxY protein] + thiosulfate + 2 Fe(III)-[cytochrome c] = S-sulfosulfanyl-L-cysteinyl-[SoxY protein] + 2 Fe(II)-[cytochrome c] + 2 H(+). It catalyses the reaction S-sulfanyl-L-cysteinyl-[SoxY protein] + thiosulfate + 2 Fe(III)-[cytochrome c] = S-(2-sulfodisulfanyl)-L-cysteinyl-[SoxY protein] + 2 Fe(II)-[cytochrome c] + 2 H(+). Its function is as follows. C-type monoheme cytochrome, which is part of the SoxAX cytochrome complex involved in sulfur oxidation. The SoxAX complex catalyzes the formation of a heterodisulfide bond between the conserved cysteine residue on a sulfur carrier SoxYZ complex subunit SoxY and thiosulfate or other inorganic sulfur substrates. This leads to the liberation of two electrons, which may be transferred from the SoxAX complex to another cytochrome c that then channels them into the respiratory electron transport chain. Some electrons may be used for reductive CO(2) fixation. This chain is L-cysteine S-thiosulfotransferase subunit SoxA, found in Hydrogenophilus thermoluteolus (Pseudomonas hydrogenothermophila).